The following is a 293-amino-acid chain: Probable tRNA-splicing endonuclease subunit Sen2 (293 aa).

Catalysis depends on residues tyrosine 157, histidine 165, and lysine 204. A helical membrane pass occupies residues 267 to 287 (VVFNHWGVILGFTVLSGLLVY).

This sequence belongs to the tRNA-intron endonuclease family. TRNA splicing endonuclease is a heterotetramer composed of SEN2, SEN15, SEN34/LENG5 and SEN54.

Its subcellular location is the nucleus. It is found in the membrane. It catalyses the reaction pretRNA = a 3'-half-tRNA molecule with a 5'-OH end + a 5'-half-tRNA molecule with a 2',3'-cyclic phosphate end + an intron with a 2',3'-cyclic phosphate and a 5'-hydroxyl terminus.. Functionally, constitutes one of the two catalytic subunit of the tRNA-splicing endonuclease complex, a complex responsible for identification and cleavage of the splice sites in pre-tRNA. It cleaves pre-tRNA at the 5'- and 3'-splice sites to release the intron. The products are an intron and two tRNA half-molecules bearing 2',3'-cyclic phosphate and 5'-OH termini. There are no conserved sequences at the splice sites, but the intron is invariably located at the same site in the gene, placing the splice sites an invariant distance from the constant structural features of the tRNA body. Probably carries the active site for 5'-splice site cleavage. This is Probable tRNA-splicing endonuclease subunit Sen2 from Oryza sativa subsp. japonica (Rice).